Consider the following 660-residue polypeptide: Acetyl-coenzyme A synthetase (660 aa).

CoA-binding positions include 197–200 and threonine 317; that span reads RGGK. Residues 397–399, 421–426, aspartate 512, and arginine 528 each bind ATP; these read GEP and DTFWQT. Serine 536 serves as a coordination point for CoA. Arginine 539 contributes to the ATP binding site. Residues valine 550 and valine 555 each coordinate Mg(2+). Lysine 625 carries the post-translational modification N6-acetyllysine.

The protein belongs to the ATP-dependent AMP-binding enzyme family. It depends on Mg(2+) as a cofactor. Acetylated. Deacetylation by the SIR2-homolog deacetylase activates the enzyme.

It catalyses the reaction acetate + ATP + CoA = acetyl-CoA + AMP + diphosphate. Its function is as follows. Catalyzes the conversion of acetate into acetyl-CoA (AcCoA), an essential intermediate at the junction of anabolic and catabolic pathways. AcsA undergoes a two-step reaction. In the first half reaction, AcsA combines acetate with ATP to form acetyl-adenylate (AcAMP) intermediate. In the second half reaction, it can then transfer the acetyl group from AcAMP to the sulfhydryl group of CoA, forming the product AcCoA. The sequence is that of Acetyl-coenzyme A synthetase from Cupriavidus taiwanensis (strain DSM 17343 / BCRC 17206 / CCUG 44338 / CIP 107171 / LMG 19424 / R1) (Ralstonia taiwanensis (strain LMG 19424)).